An 806-amino-acid chain; its full sequence is MRFKEVGLLFCQLLAVLIFAAGFFPQKKVLKGDAQFQYMAETQRALEPAFDKLVLVVIDALRADFLFQQNVSHFDFVHELLNRGEAWGFTAYSNPPTVTLPRLKGITTGSAPNFLDAILNVAEDDSSSNLKDQDSWISQFAKHGKKIHFFGDDTWLKLFPEEFFQKHDGTNSFFVSDFEEVDTNVTRHLPHELQHKDWDVLILHYLGLDHIGHKGGAASQFMPPKHREMDAVIRQIYDQVDNRTLLCVMGDHGMNDLGNHGGSSAGETSAGMVFISKMLSSYPRPAAQDGVSSPVTAAEDYQFFTRIQQVDFVPTIASLFNIPIPKNSLGVFVREFSSLLGQHATTKIIENYHQLMQLAAKKTAARGNDDIDSMLAEMKDVQATLARTATNYNYAMLFLGVGMLSIVTAATAYCYISSARLNEASVLMIAVTALLGSSVFGSSFVEEEHQIWWWIIIAVVGYSWATRPSCTPSHLVFLVCARLLRGWNNSGQKFMYDFTVAELLKSHPSIKWLLVCATLAVVALDGFTERPLLSIFNLLAGLLCFVYKTCWANVNGEVSPTYAQTLVTKACSLLFAGGTPWDDKQLLVPLARLFFKVTAAIVCMRIAYNVVFAKRKFLSELFPLFTIVLIMQTASQNIPLFLVFTIMRSSLRNILRVGYPQQRCEMFFVLSLILQNLSFFQFGGTNSIATIDLTNSYNGISENYNIYVVGLLMCIGNMAPAIYWSLAAVVDHQLYSKKSYAQQKLSSMFFYSVNSLLLLVACICMRYHLFIWSVFSPKLCYLLGWNILIHFLTETVLEPFLLMVAG.

Asn70, Asn184, and Asn242 each carry an N-linked (GlcNAc...) asparagine glycan. Helical transmembrane passes span 396–416 (MLFLGVGMLSIVTAATAYCYI), 425–445 (SVLMIAVTALLGSSVFGSSFV), and 451–471 (IWWWIIIAVVGYSWATRPSCT). N-linked (GlcNAc...) asparagine glycosylation occurs at Asn488. Transmembrane regions (helical) follow at residues 508–528 (PSIKWLLVCATLAVVALDGFT), 532–552 (LLSIFNLLAGLLCFVYKTCWA), 593–613 (LFFKVTAAIVCMRIAYNVVFA), 624–644 (LFTIVLIMQTASQNIPLFLVF), 664–684 (CEMFFVLSLILQNLSFFQFGG), 706–726 (IYVVGLLMCIGNMAPAIYWSL), 745–765 (LSSMFFYSVNSLLLLVACICM), and 782–804 (LLGWNILIHFLTETVLEPFLLMV).

Belongs to the PIGG/PIGN/PIGO family. PIGG subfamily.

Its subcellular location is the endoplasmic reticulum membrane. Its pathway is glycolipid biosynthesis; glycosylphosphatidylinositol-anchor biosynthesis. Functionally, ethanolamine phosphate transferase involved in glycosylphosphatidylinositol-anchor biosynthesis. Transfers ethanolamine phosphate to the GPI second mannose. The sequence is that of GPI ethanolamine phosphate transferase 2 (LAS21) from Eremothecium gossypii (strain ATCC 10895 / CBS 109.51 / FGSC 9923 / NRRL Y-1056) (Yeast).